The chain runs to 702 residues: Phosphoglycerol transferase I (702 aa).

A run of 3 helical transmembrane segments spans residues 2 to 22 (HWMLLVSLLLLLWLLVASPRL), 71 to 91 (FSGYIAVFVGMLLLSLSPLLL), and 103 to 123 (GGAVFAGFVGMLLVGIAASPL).

This sequence belongs to the OpgB family.

It is found in the cell inner membrane. The enzyme catalyses a phosphatidylglycerol + a membrane-derived-oligosaccharide D-glucose = a 1,2-diacyl-sn-glycerol + a membrane-derived-oligosaccharide 6-(glycerophospho)-D-glucose.. The protein operates within glycan metabolism; osmoregulated periplasmic glucan (OPG) biosynthesis. Transfers a phosphoglycerol residue from phosphatidylglycerol to the membrane-bound nascent glucan backbones. This is Phosphoglycerol transferase I from Xanthomonas euvesicatoria pv. vesicatoria (strain 85-10) (Xanthomonas campestris pv. vesicatoria).